Here is a 235-residue protein sequence, read N- to C-terminus: Large ribosomal subunit protein uL1 (235 aa).

Belongs to the universal ribosomal protein uL1 family. Part of the 50S ribosomal subunit.

Functionally, binds directly to 23S rRNA. The L1 stalk is quite mobile in the ribosome, and is involved in E site tRNA release. Its function is as follows. Protein L1 is also a translational repressor protein, it controls the translation of the L11 operon by binding to its mRNA. In Rhodospirillum centenum (strain ATCC 51521 / SW), this protein is Large ribosomal subunit protein uL1.